Reading from the N-terminus, the 49-residue chain is Large ribosomal subunit protein eL40 (49 aa).

This sequence belongs to the eukaryotic ribosomal protein eL40 family.

The chain is Large ribosomal subunit protein eL40 from Halorubrum lacusprofundi (strain ATCC 49239 / DSM 5036 / JCM 8891 / ACAM 34).